The sequence spans 500 residues: L-arabinose isomerase (500 aa).

Residues Glu-306, Glu-333, His-350, and His-450 each contribute to the Mn(2+) site.

Belongs to the arabinose isomerase family. In terms of assembly, homohexamer. Mn(2+) serves as cofactor.

The catalysed reaction is beta-L-arabinopyranose = L-ribulose. The protein operates within carbohydrate degradation; L-arabinose degradation via L-ribulose; D-xylulose 5-phosphate from L-arabinose (bacterial route): step 1/3. Its function is as follows. Catalyzes the conversion of L-arabinose to L-ribulose. In Salmonella enteritidis PT4 (strain P125109), this protein is L-arabinose isomerase.